Here is a 104-residue protein sequence, read N- to C-terminus: Large ribosomal subunit protein bL21 (104 aa).

The protein belongs to the bacterial ribosomal protein bL21 family. Part of the 50S ribosomal subunit. Contacts protein L20.

Functionally, this protein binds to 23S rRNA in the presence of protein L20. The sequence is that of Large ribosomal subunit protein bL21 from Helicobacter pylori (strain G27).